We begin with the raw amino-acid sequence, 115 residues long: Probable non-functional T cell receptor beta variable 23-1 (115 aa).

A signal peptide spans 1 to 21 (MGTRLLGCAALCLLAADSFHA). The Ig-like domain occupies 22-115 (KVTQTPGHLV…TALYLCASSQ (94 aa)). Residues C42 and C111 are joined by a disulfide bond.

In terms of assembly, alpha-beta TR is a heterodimer composed of an alpha and beta chain; disulfide-linked. The alpha-beta TR is associated with the transmembrane signaling CD3 coreceptor proteins to form the TR-CD3 (TcR or TCR). The assembly of alpha-beta TR heterodimers with CD3 occurs in the endoplasmic reticulum where a single alpha-beta TR heterodimer associates with one CD3D-CD3E heterodimer, one CD3G-CD3E heterodimer and one CD247 homodimer forming a stable octameric structure. CD3D-CD3E and CD3G-CD3E heterodimers preferentially associate with TR alpha and TR beta chains, respectively. The association of the CD247 homodimer is the last step of TcR assembly in the endoplasmic reticulum and is required for transport to the cell surface.

The protein localises to the cell membrane. Probable non-functional open reading frame (ORF) of V region of the variable domain of T cell receptor (TR) beta chain. Non-functional ORF generally cannot participate in the synthesis of a productive T cell receptor (TR) chain due to altered V-(D)-J or switch recombination and/or splicing site (at mRNA level) and/or conserved amino acid change (protein level). Alpha-beta T cell receptors are antigen specific receptors which are essential to the immune response and are present on the cell surface of T lymphocytes. Recognize peptide-major histocompatibility (MH) (pMH) complexes that are displayed by antigen presenting cells (APC), a prerequisite for efficient T cell adaptive immunity against pathogens. Binding of alpha-beta TR to pMH complex initiates TR-CD3 clustering on the cell surface and intracellular activation of LCK that phosphorylates the ITAM motifs of CD3G, CD3D, CD3E and CD247 enabling the recruitment of ZAP70. In turn ZAP70 phosphorylates LAT, which recruits numerous signaling molecules to form the LAT signalosome. The LAT signalosome propagates signal branching to three major signaling pathways, the calcium, the mitogen-activated protein kinase (MAPK) kinase and the nuclear factor NF-kappa-B (NF-kB) pathways, leading to the mobilization of transcription factors that are critical for gene expression and essential for T cell growth and differentiation. The T cell repertoire is generated in the thymus, by V-(D)-J rearrangement. This repertoire is then shaped by intrathymic selection events to generate a peripheral T cell pool of self-MH restricted, non-autoaggressive T cells. Post-thymic interaction of alpha-beta TR with the pMH complexes shapes TR structural and functional avidity. The protein is Probable non-functional T cell receptor beta variable 23-1 of Homo sapiens (Human).